The chain runs to 235 residues: Phosphoribosylaminoimidazole-succinocarboxamide synthase (235 aa).

It belongs to the SAICAR synthetase family.

The enzyme catalyses 5-amino-1-(5-phospho-D-ribosyl)imidazole-4-carboxylate + L-aspartate + ATP = (2S)-2-[5-amino-1-(5-phospho-beta-D-ribosyl)imidazole-4-carboxamido]succinate + ADP + phosphate + 2 H(+). It participates in purine metabolism; IMP biosynthesis via de novo pathway; 5-amino-1-(5-phospho-D-ribosyl)imidazole-4-carboxamide from 5-amino-1-(5-phospho-D-ribosyl)imidazole-4-carboxylate: step 1/2. This is Phosphoribosylaminoimidazole-succinocarboxamide synthase from Streptococcus gordonii (strain Challis / ATCC 35105 / BCRC 15272 / CH1 / DL1 / V288).